Here is a 580-residue protein sequence, read N- to C-terminus: Adenine deaminase (580 aa).

The protein belongs to the metallo-dependent hydrolases superfamily. Adenine deaminase family. The cofactor is Mn(2+).

It catalyses the reaction adenine + H2O + H(+) = hypoxanthine + NH4(+). The polypeptide is Adenine deaminase (Listeria monocytogenes serovar 1/2a (strain ATCC BAA-679 / EGD-e)).